Reading from the N-terminus, the 75-residue chain is Tetrahydromethanopterin S-methyltransferase subunit F (75 aa).

The helical transmembrane segment at Phe-53–Leu-73 threads the bilayer.

It belongs to the MtrF family. In terms of assembly, the complex is composed of 8 subunits; MtrA, MtrB, MtrC, MtrD, MtrE, MtrF, MtrG and MtrH.

The protein localises to the cell membrane. The catalysed reaction is 5-methyl-5,6,7,8-tetrahydromethanopterin + coenzyme M + 2 Na(+)(in) = 5,6,7,8-tetrahydromethanopterin + methyl-coenzyme M + 2 Na(+)(out). Its pathway is one-carbon metabolism; methanogenesis from CO(2); methyl-coenzyme M from 5,10-methylene-5,6,7,8-tetrahydromethanopterin: step 2/2. Part of a complex that catalyzes the formation of methyl-coenzyme M and tetrahydromethanopterin from coenzyme M and methyl-tetrahydromethanopterin. This is an energy-conserving, sodium-ion translocating step. The chain is Tetrahydromethanopterin S-methyltransferase subunit F from Methanopyrus kandleri (strain AV19 / DSM 6324 / JCM 9639 / NBRC 100938).